The primary structure comprises 835 residues: Ribosome-releasing factor 2, mitochondrial (835 aa).

The transit peptide at 1–50 directs the protein to the mitochondrion; sequence MPWCNTRLRTCGASPKIFLRRVRCPVLLHNWTIGRVSSVSKMILRFLRSY. A tr-type G domain is found at 57 to 343; it reads TRVRNIGIIA…AVVDYLPSPA (287 aa). GTP is bound by residues 66–73, 131–135, and 183–186; these read AHIDAGKT, DTPGH, and NKMD.

The protein belongs to the TRAFAC class translation factor GTPase superfamily. Classic translation factor GTPase family. EF-G/EF-2 subfamily.

The protein resides in the mitochondrion. Its function is as follows. Mitochondrial GTPase that mediates the disassembly of ribosomes from messenger RNA at the termination of mitochondrial protein biosynthesis. Not involved in the GTP-dependent ribosomal translocation step during translation elongation. The protein is Ribosome-releasing factor 2, mitochondrial of Eremothecium gossypii (strain ATCC 10895 / CBS 109.51 / FGSC 9923 / NRRL Y-1056) (Yeast).